We begin with the raw amino-acid sequence, 133 residues long: MTTDTIFPPHGRLMTKLTALGPYLRKQQSKEGEFFFDCLASCISANKSPEEREFWGWWLVLTATDIGFEYRYDFGRYDAKGNWIKGTLPAKHTEAVLKTLDDFYVKLTKFVKEDCQLDLQASAELEEAVLGSA.

Residues T99 to S122 are essential for activity.

It belongs to the Crl family.

The protein localises to the cytoplasm. Functionally, binds to the sigma-S subunit of RNA polymerase, activating expression of sigma-S-regulated genes. Stimulates RNA polymerase holoenzyme formation and may bind to several other sigma factors, such as sigma-70 and sigma-32. The polypeptide is Sigma factor-binding protein Crl (Photobacterium profundum (strain SS9)).